A 133-amino-acid chain; its full sequence is Thioredoxin-like protein CXXS1 (133 aa).

Positions 1–120 (MEIQQQKGVG…VKKMVDASAE (120 aa)) constitute a Thioredoxin domain.

It belongs to the thioredoxin family.

This Oryza sativa subsp. japonica (Rice) protein is Thioredoxin-like protein CXXS1.